A 196-amino-acid chain; its full sequence is Chloroplastic ATP-dependent Clp protease proteolytic subunit 1 (196 aa).

Serine 101 serves as the catalytic Nucleophile. Histidine 126 is an active-site residue.

The protein belongs to the peptidase S14 family. In terms of assembly, component of the chloroplastic Clp protease core complex which consist of at least 16 proteins: CLPP4 (3 copies), CLPP5 (3 copies), CLPR4 (2 copies), ClpP1 (1 copy), CLPP6 (1 copy), CLPR2 (1 copy), CLPT1 (1 copy), CLPT2 (1 copy) and 3 copies of CLPP3 and/or CLPR1 and/or CLPR3. The core complex is organized in two heptameric rings, one containing CLPP3,4,5,6 in a 1:2:3:1 ratio and the other CLPP1 and CLPR1,2,3,4 in a 3:1:1:1:1 ratio. Mostly expressed in leaves. Also detected in stems, and to a lower extent, in roots (at protein level).

Its subcellular location is the plastid. It is found in the chloroplast stroma. The enzyme catalyses Hydrolysis of proteins to small peptides in the presence of ATP and magnesium. alpha-casein is the usual test substrate. In the absence of ATP, only oligopeptides shorter than five residues are hydrolyzed (such as succinyl-Leu-Tyr-|-NHMec, and Leu-Tyr-Leu-|-Tyr-Trp, in which cleavage of the -Tyr-|-Leu- and -Tyr-|-Trp bonds also occurs).. Cleaves peptides in various proteins in a process that requires ATP hydrolysis. Has a chymotrypsin-like activity. Plays a major role in the degradation of misfolded proteins. This chain is Chloroplastic ATP-dependent Clp protease proteolytic subunit 1, found in Arabidopsis thaliana (Mouse-ear cress).